Consider the following 454-residue polypeptide: tRNA modification GTPase MnmE (454 aa).

3 residues coordinate (6S)-5-formyl-5,6,7,8-tetrahydrofolate: Arg-23, Glu-80, and Lys-120. The 162-residue stretch at 216–377 (GMKVVIAGRP…LRDHLKQSMG (162 aa)) folds into the TrmE-type G domain. A K(+)-binding site is contributed by Asn-226. GTP-binding positions include 226-231 (NAGKSS), 245-251 (TDIAGTT), 270-273 (DTAG), 335-338 (NKAD), and 358-360 (SAR). Mg(2+) is bound at residue Ser-230. Positions 245, 247, and 250 each coordinate K(+). A Mg(2+)-binding site is contributed by Thr-251. Lys-454 contacts (6S)-5-formyl-5,6,7,8-tetrahydrofolate.

This sequence belongs to the TRAFAC class TrmE-Era-EngA-EngB-Septin-like GTPase superfamily. TrmE GTPase family. Homodimer. Heterotetramer of two MnmE and two MnmG subunits. The cofactor is K(+).

Its subcellular location is the cytoplasm. Its function is as follows. Exhibits a very high intrinsic GTPase hydrolysis rate. Involved in the addition of a carboxymethylaminomethyl (cmnm) group at the wobble position (U34) of certain tRNAs, forming tRNA-cmnm(5)s(2)U34. In Yersinia pseudotuberculosis serotype O:3 (strain YPIII), this protein is tRNA modification GTPase MnmE.